We begin with the raw amino-acid sequence, 470 residues long: Ribosomal protein uS12 methylthiotransferase RimO (470 aa).

In terms of domain architecture, MTTase N-terminal spans 20–131 (PTVAFAHLGC…IVEVLQQVEA (112 aa)). Residues Cys29, Cys65, Cys94, Cys169, Cys173, and Cys176 each coordinate [4Fe-4S] cluster. In terms of domain architecture, Radical SAM core spans 155-384 (TTGEAVAYLK…MTLQQPISAA (230 aa)). In terms of domain architecture, TRAM spans 387–458 (ASWIGKTVDV…IYDLSGHVVS (72 aa)).

It belongs to the methylthiotransferase family. RimO subfamily. Requires [4Fe-4S] cluster as cofactor.

The protein localises to the cytoplasm. The catalysed reaction is L-aspartate(89)-[ribosomal protein uS12]-hydrogen + (sulfur carrier)-SH + AH2 + 2 S-adenosyl-L-methionine = 3-methylsulfanyl-L-aspartate(89)-[ribosomal protein uS12]-hydrogen + (sulfur carrier)-H + 5'-deoxyadenosine + L-methionine + A + S-adenosyl-L-homocysteine + 2 H(+). Catalyzes the methylthiolation of an aspartic acid residue of ribosomal protein uS12. The chain is Ribosomal protein uS12 methylthiotransferase RimO from Synechococcus sp. (strain CC9311).